The sequence spans 169 residues: Mediator of RNA polymerase II transcription subunit 28 (169 aa).

The disordered stretch occupies residues 1-35 (MFSAQQPGPPPPNQPGAPAGLMSTPPGAKNPSSTL). The stretch at 99–137 (EQVIKEDVSELRNELQRKEALIQKHLTKLRSWQQVLEEI) forms a coiled coil.

It belongs to the Mediator complex subunit 28 family. As to quaternary structure, component of the Mediator complex.

The protein resides in the nucleus. In terms of biological role, component of the Mediator complex, a coactivator involved in the regulated transcription of nearly all RNA polymerase II-dependent genes. Mediator functions as a bridge to convey information from gene-specific regulatory proteins to the basal RNA polymerase II transcription machinery. Mediator is recruited to promoters by direct interactions with regulatory proteins and serves as a scaffold for the assembly of a functional preinitiation complex with RNA polymerase II and the general transcription factors. This Xenopus tropicalis (Western clawed frog) protein is Mediator of RNA polymerase II transcription subunit 28 (med28).